A 255-amino-acid polypeptide reads, in one-letter code: Post-GPI attachment to proteins factor 2 (255 aa).

5 consecutive transmembrane segments (helical) span residues 23–43, 111–131, 143–163, 185–205, and 209–229; these read LALV…IWSL, LGIL…CLSF, NAFV…YLLN, LFLV…RHNS, and AGVY…NMGF.

Belongs to the PGAP2 family.

Its subcellular location is the golgi apparatus membrane. It is found in the endoplasmic reticulum membrane. Functionally, involved in the lipid remodeling steps of GPI-anchor maturation. Required for stable expression of GPI-anchored proteins at the cell surface. The chain is Post-GPI attachment to proteins factor 2 from Drosophila melanogaster (Fruit fly).